The sequence spans 439 residues: Xaa-Pro dipeptidase (439 aa).

D244, D255, H335, E380, and E419 together coordinate Mn(2+).

It belongs to the peptidase M24B family. Bacterial-type prolidase subfamily. Mn(2+) is required as a cofactor.

The enzyme catalyses Xaa-L-Pro dipeptide + H2O = an L-alpha-amino acid + L-proline. In terms of biological role, splits dipeptides with a prolyl residue in the C-terminal position. The sequence is that of Xaa-Pro dipeptidase from Shewanella sp. (strain MR-4).